Reading from the N-terminus, the 631-residue chain is tRNA uridine 5-carboxymethylaminomethyl modification enzyme MnmG (631 aa).

FAD-binding positions include 13 to 18 (GGGHAG), Val-125, and Ser-180. An NAD(+)-binding site is contributed by 273–287 (GPRYCPSIEDKVNRY). An FAD-binding site is contributed by Gln-370.

This sequence belongs to the MnmG family. As to quaternary structure, homodimer. Heterotetramer of two MnmE and two MnmG subunits. The cofactor is FAD.

The protein resides in the cytoplasm. Its function is as follows. NAD-binding protein involved in the addition of a carboxymethylaminomethyl (cmnm) group at the wobble position (U34) of certain tRNAs, forming tRNA-cmnm(5)s(2)U34. This Alcanivorax borkumensis (strain ATCC 700651 / DSM 11573 / NCIMB 13689 / SK2) protein is tRNA uridine 5-carboxymethylaminomethyl modification enzyme MnmG.